A 78-amino-acid chain; its full sequence is Large ribosomal subunit protein eL20 (78 aa).

Belongs to the eukaryotic ribosomal protein eL20 family. Part of the 50S ribosomal subunit. Binds 23S rRNA.

This is Large ribosomal subunit protein eL20 from Pyrobaculum neutrophilum (strain DSM 2338 / JCM 9278 / NBRC 100436 / V24Sta) (Thermoproteus neutrophilus).